The sequence spans 247 residues: 5'-nucleotidase SurE (247 aa).

Residues aspartate 8, aspartate 9, serine 39, and asparagine 95 each coordinate a divalent metal cation.

This sequence belongs to the SurE nucleotidase family. It depends on a divalent metal cation as a cofactor.

The protein resides in the cytoplasm. The catalysed reaction is a ribonucleoside 5'-phosphate + H2O = a ribonucleoside + phosphate. Nucleotidase that shows phosphatase activity on nucleoside 5'-monophosphates. The protein is 5'-nucleotidase SurE of Thermotoga petrophila (strain ATCC BAA-488 / DSM 13995 / JCM 10881 / RKU-1).